Here is a 334-residue protein sequence, read N- to C-terminus: Protein-glutamate methylesterase/protein-glutamine glutaminase 1 (334 aa).

One can recognise a Response regulatory domain in the interval 2 to 120 (NIGIVNDLPL…GAAGDTTKLL (119 aa)). At Asp-53 the chain carries 4-aspartylphosphate. Residues 145–334 (RAGGGPLIAI…AGELAALARI (190 aa)) enclose the CheB-type methylesterase domain. Residues Ser-157, His-184, and Asp-277 contribute to the active site.

This sequence belongs to the CheB family. Post-translationally, phosphorylated by CheA. Phosphorylation of the N-terminal regulatory domain activates the methylesterase activity.

The protein resides in the cytoplasm. The catalysed reaction is [protein]-L-glutamate 5-O-methyl ester + H2O = L-glutamyl-[protein] + methanol + H(+). It carries out the reaction L-glutaminyl-[protein] + H2O = L-glutamyl-[protein] + NH4(+). In terms of biological role, involved in chemotaxis. Part of a chemotaxis signal transduction system that modulates chemotaxis in response to various stimuli. Catalyzes the demethylation of specific methylglutamate residues introduced into the chemoreceptors (methyl-accepting chemotaxis proteins or MCP) by CheR. Also mediates the irreversible deamidation of specific glutamine residues to glutamic acid. This chain is Protein-glutamate methylesterase/protein-glutamine glutaminase 1, found in Burkholderia lata (strain ATCC 17760 / DSM 23089 / LMG 22485 / NCIMB 9086 / R18194 / 383).